Consider the following 169-residue polypeptide: Ribosome maturation factor RimM (169 aa).

The PRC barrel domain maps to 93–166; that stretch reads GEHEFYYHEI…RIQITPLPGL (74 aa).

This sequence belongs to the RimM family. In terms of assembly, binds ribosomal protein uS19.

It localises to the cytoplasm. Its function is as follows. An accessory protein needed during the final step in the assembly of 30S ribosomal subunit, possibly for assembly of the head region. Essential for efficient processing of 16S rRNA. May be needed both before and after RbfA during the maturation of 16S rRNA. It has affinity for free ribosomal 30S subunits but not for 70S ribosomes. The protein is Ribosome maturation factor RimM of Exiguobacterium sibiricum (strain DSM 17290 / CCUG 55495 / CIP 109462 / JCM 13490 / 255-15).